Here is a 163-residue protein sequence, read N- to C-terminus: UPF0587 protein CG4646 (163 aa).

Zn(2+) contacts are provided by cysteine 33, cysteine 36, cysteine 68, and cysteine 71.

The protein belongs to the UPF0587 family.

This Drosophila melanogaster (Fruit fly) protein is UPF0587 protein CG4646.